The sequence spans 196 residues: Imidazole glycerol phosphate synthase subunit HisH (196 aa).

The Glutamine amidotransferase type-1 domain maps to 2–196 (KVAVIKYNAG…ERIIKNFLEL (195 aa)). Cys77 serves as the catalytic Nucleophile. Residues His178 and Glu180 contribute to the active site.

As to quaternary structure, heterodimer of HisH and HisF.

The protein resides in the cytoplasm. The catalysed reaction is 5-[(5-phospho-1-deoxy-D-ribulos-1-ylimino)methylamino]-1-(5-phospho-beta-D-ribosyl)imidazole-4-carboxamide + L-glutamine = D-erythro-1-(imidazol-4-yl)glycerol 3-phosphate + 5-amino-1-(5-phospho-beta-D-ribosyl)imidazole-4-carboxamide + L-glutamate + H(+). It catalyses the reaction L-glutamine + H2O = L-glutamate + NH4(+). It functions in the pathway amino-acid biosynthesis; L-histidine biosynthesis; L-histidine from 5-phospho-alpha-D-ribose 1-diphosphate: step 5/9. Its function is as follows. IGPS catalyzes the conversion of PRFAR and glutamine to IGP, AICAR and glutamate. The HisH subunit catalyzes the hydrolysis of glutamine to glutamate and ammonia as part of the synthesis of IGP and AICAR. The resulting ammonia molecule is channeled to the active site of HisF. The protein is Imidazole glycerol phosphate synthase subunit HisH of Bacteroides fragilis (strain YCH46).